Here is a 423-residue protein sequence, read N- to C-terminus: Amino acid transporter AVT1J (423 aa).

The next 11 helical transmembrane spans lie at 39-59, 63-83, 110-130, 151-171, 186-206, 219-239, 252-272, 297-317, 333-355, 359-381, and 390-410; these read CFHGINALSGVGILSVPYALA, WLSLIILFTVAITTFYCAILI, VIVSIFMNLELYLVATSFLIL, FQGKQMFIIMVALIILPSVWL, FASGVILASIFSVGAFEGVGF, VATSVSLYAFCYCAHPVFPTL, VMIICFTICTFIYASVAVLGY, AIWTTLVNPIAKFALMVTPII, ASGFLLSTILVTSNVIVALLLPF, LMSLVGAFLSASASVILPCLCYL, and LGFETLVLIGITLTGIVVVIT.

This sequence belongs to the amino acid/polyamine transporter 2 family. Amino acid/auxin permease (AAAP) (TC 2.A.18.5) subfamily.

The protein resides in the membrane. This chain is Amino acid transporter AVT1J, found in Arabidopsis thaliana (Mouse-ear cress).